The sequence spans 167 residues: Large ribosomal subunit protein bL9 (167 aa).

This sequence belongs to the bacterial ribosomal protein bL9 family.

In terms of biological role, binds to the 23S rRNA. This chain is Large ribosomal subunit protein bL9, found in Nitratidesulfovibrio vulgaris (strain DSM 19637 / Miyazaki F) (Desulfovibrio vulgaris).